A 333-amino-acid polypeptide reads, in one-letter code: Abequosyltransferase RfbV (333 aa).

This sequence belongs to the glycosyltransferase 2 family.

The catalysed reaction is CDP-alpha-D-abequose + alpha-D-Man-(1-&gt;4)-alpha-L-Rha-(1-&gt;3)-alpha-D-Gal-di-trans,octa-cis-undecaprenyl diphosphate = alpha-D-Abe-(1-&gt;3)-alpha-D-Man-(1-&gt;4)-alpha-L-Rha-(1-&gt;3)-alpha-D-Gal-di-trans,octa-cis-undecaprenyl diphosphate + CDP + H(+). It participates in bacterial outer membrane biogenesis; LPS O-antigen biosynthesis. Functionally, catalyzes the transfer of CDP-abequose on D-mannosyl-L-rhamnosyl-D-galactose-1-diphospholipid to yield D-abequosyl-D-mannosyl-rhamnosyl-D-galactose-1-diphospholipid. The sequence is that of Abequosyltransferase RfbV (rfbV) from Salmonella typhimurium (strain LT2 / SGSC1412 / ATCC 700720).